We begin with the raw amino-acid sequence, 349 residues long: Phosphoribosylformylglycinamidine cyclo-ligase (349 aa).

Belongs to the AIR synthase family.

The protein localises to the cytoplasm. It carries out the reaction 2-formamido-N(1)-(5-O-phospho-beta-D-ribosyl)acetamidine + ATP = 5-amino-1-(5-phospho-beta-D-ribosyl)imidazole + ADP + phosphate + H(+). It functions in the pathway purine metabolism; IMP biosynthesis via de novo pathway; 5-amino-1-(5-phospho-D-ribosyl)imidazole from N(2)-formyl-N(1)-(5-phospho-D-ribosyl)glycinamide: step 2/2. The polypeptide is Phosphoribosylformylglycinamidine cyclo-ligase (Lactobacillus helveticus (strain DPC 4571)).